We begin with the raw amino-acid sequence, 393 residues long: Riboflavin biosynthesis protein RibBA (393 aa).

The tract at residues 1–200 (MQFDNIDSAL…IDDLIEYRKK (200 aa)) is DHBP synthase. D-ribulose 5-phosphate contacts are provided by residues 27–28 (RE), aspartate 32, 139–143 (RNGHT), and glutamate 163. Glutamate 28 is a binding site for Mg(2+). Histidine 142 serves as a coordination point for Mg(2+). Residues 201-393 (LEPEIEFKAK…TKKIKMGHLI (193 aa)) are GTP cyclohydrolase II. Residue 249–253 (RLHSA) coordinates GTP. 3 residues coordinate Zn(2+): cysteine 254, cysteine 265, and cysteine 267. GTP-binding positions include glutamine 270, 291–293 (EGR), and threonine 313. Aspartate 325 functions as the Proton acceptor; for GTP cyclohydrolase activity in the catalytic mechanism. Arginine 327 serves as the catalytic Nucleophile; for GTP cyclohydrolase activity. Residues serine 348 and lysine 353 each contribute to the GTP site.

It in the N-terminal section; belongs to the DHBP synthase family. This sequence in the C-terminal section; belongs to the GTP cyclohydrolase II family. The cofactor is Mg(2+). It depends on Mn(2+) as a cofactor. Zn(2+) serves as cofactor.

The catalysed reaction is D-ribulose 5-phosphate = (2S)-2-hydroxy-3-oxobutyl phosphate + formate + H(+). The enzyme catalyses GTP + 4 H2O = 2,5-diamino-6-hydroxy-4-(5-phosphoribosylamino)-pyrimidine + formate + 2 phosphate + 3 H(+). It participates in cofactor biosynthesis; riboflavin biosynthesis; 2-hydroxy-3-oxobutyl phosphate from D-ribulose 5-phosphate: step 1/1. It functions in the pathway cofactor biosynthesis; riboflavin biosynthesis; 5-amino-6-(D-ribitylamino)uracil from GTP: step 1/4. In terms of biological role, catalyzes the conversion of D-ribulose 5-phosphate to formate and 3,4-dihydroxy-2-butanone 4-phosphate. Catalyzes the conversion of GTP to 2,5-diamino-6-ribosylamino-4(3H)-pyrimidinone 5'-phosphate (DARP), formate and pyrophosphate. This chain is Riboflavin biosynthesis protein RibBA, found in Staphylococcus aureus (strain MRSA252).